A 548-amino-acid polypeptide reads, in one-letter code: Membrane protein insertase YidC (548 aa).

The chain crosses the membrane as a helical span at residues Asn6–Asp26. The tract at residues Asn28 to Gly56 is disordered. Over residues Pro29–Thr42 the composition is skewed to low complexity. A run of 4 helical transmembrane segments spans residues Phe350–Tyr370, Phe424–Ile444, Leu458–Ile478, and Pro499–Val519.

This sequence belongs to the OXA1/ALB3/YidC family. Type 1 subfamily. Interacts with the Sec translocase complex via SecD. Specifically interacts with transmembrane segments of nascent integral membrane proteins during membrane integration.

It is found in the cell inner membrane. Required for the insertion and/or proper folding and/or complex formation of integral membrane proteins into the membrane. Involved in integration of membrane proteins that insert both dependently and independently of the Sec translocase complex, as well as at least some lipoproteins. Aids folding of multispanning membrane proteins. This is Membrane protein insertase YidC from Salmonella dublin (strain CT_02021853).